The following is a 285-amino-acid chain: Energy-coupling factor transporter ATP-binding protein EcfA2 (285 aa).

The ABC transporter domain maps to 3-245 (IKFKKVDYIY…RKWLKKHNLS (243 aa)). ATP is bound at residue 40 to 47 (GHTGSGKS).

This sequence belongs to the ABC transporter superfamily. Energy-coupling factor EcfA family. As to quaternary structure, forms a stable energy-coupling factor (ECF) transporter complex composed of 2 membrane-embedded substrate-binding proteins (S component), 2 ATP-binding proteins (A component) and 2 transmembrane proteins (T component).

The protein localises to the cell membrane. Its function is as follows. ATP-binding (A) component of a common energy-coupling factor (ECF) ABC-transporter complex. Unlike classic ABC transporters this ECF transporter provides the energy necessary to transport a number of different substrates. This is Energy-coupling factor transporter ATP-binding protein EcfA2 from Lactobacillus acidophilus (strain ATCC 700396 / NCK56 / N2 / NCFM).